The following is a 198-amino-acid chain: Peptide deformylase (198 aa).

Positions 123 and 170 each coordinate Fe cation. The active site involves Glu171. His174 contacts Fe cation.

It belongs to the polypeptide deformylase family. The cofactor is Fe(2+).

The enzyme catalyses N-terminal N-formyl-L-methionyl-[peptide] + H2O = N-terminal L-methionyl-[peptide] + formate. Its function is as follows. Removes the formyl group from the N-terminal Met of newly synthesized proteins. Requires at least a dipeptide for an efficient rate of reaction. N-terminal L-methionine is a prerequisite for activity but the enzyme has broad specificity at other positions. In Mycoplasmopsis pulmonis (strain UAB CTIP) (Mycoplasma pulmonis), this protein is Peptide deformylase.